Here is a 352-residue protein sequence, read N- to C-terminus: Alanine racemase (352 aa).

Lys-33 acts as the Proton acceptor; specific for D-alanine in catalysis. N6-(pyridoxal phosphate)lysine is present on Lys-33. Position 129 (Arg-129) interacts with substrate. The Proton acceptor; specific for L-alanine role is filled by Tyr-250. Residue Met-298 coordinates substrate.

It belongs to the alanine racemase family. The cofactor is pyridoxal 5'-phosphate.

The enzyme catalyses L-alanine = D-alanine. Its pathway is amino-acid biosynthesis; D-alanine biosynthesis; D-alanine from L-alanine: step 1/1. Catalyzes the interconversion of L-alanine and D-alanine. May also act on other amino acids. The chain is Alanine racemase (alr) from Neisseria meningitidis serogroup B (strain ATCC BAA-335 / MC58).